Consider the following 160-residue polypeptide: Vesicle transport protein SFT2B (160 aa).

Met1 is subject to N-acetylmethionine. Over 1-36 the chain is Cytoplasmic; it reads MDKLKKVLSGQDTEDRSGLSEVVEASSLSWSTRIKG. Ser9 is modified (phosphoserine). Residues 37–57 form a helical membrane-spanning segment; sequence FIACFAIGILCSLLGTVLLWV. Over 58-63 the chain is Lumenal; sequence PRKGLH. Residues 64 to 84 traverse the membrane as a helical segment; that stretch reads LFAVFYTFGNIASIGSTIFLM. The Cytoplasmic segment spans residues 85 to 98; that stretch reads GPVKQLKRMFEPTR. Residues 99–119 traverse the membrane as a helical segment; the sequence is LIATIMVLLCFALTLCSAFWW. The Lumenal segment spans residues 120–123; sequence HNKG. A helical membrane pass occupies residues 124-144; the sequence is LALIFCILQSLALTWYSLSFI. The Cytoplasmic portion of the chain corresponds to 145–160; the sequence is PFARDAVKKCFAVCLA.

The protein belongs to the SFT2 family.

The protein localises to the membrane. Its function is as follows. May be involved in fusion of retrograde transport vesicles derived from an endocytic compartment with the Golgi complex. In Homo sapiens (Human), this protein is Vesicle transport protein SFT2B.